Reading from the N-terminus, the 346-residue chain is Phosphate acyltransferase (346 aa).

It belongs to the PlsX family. Homodimer. Probably interacts with PlsY.

It localises to the cytoplasm. It carries out the reaction a fatty acyl-[ACP] + phosphate = an acyl phosphate + holo-[ACP]. Its pathway is lipid metabolism; phospholipid metabolism. In terms of biological role, catalyzes the reversible formation of acyl-phosphate (acyl-PO(4)) from acyl-[acyl-carrier-protein] (acyl-ACP). This enzyme utilizes acyl-ACP as fatty acyl donor, but not acyl-CoA. The protein is Phosphate acyltransferase of Geobacter sulfurreducens (strain ATCC 51573 / DSM 12127 / PCA).